The following is a 159-amino-acid chain: MQLVIVAVGHKMPGWIETGFSEYAKRMPPELRIELREVKPETRSSSNNAATVMQREAARIEAVLGSLSKQCRIVALDERGRDFTTVQLAAQLTDWQREGGDVAFLIGGADGLDPALKARASTLIRLSSLTLPHGMVRVLLAEQLYRAWSVTQNHPYHRA.

S-adenosyl-L-methionine-binding positions include L76, G107, and 126–131 (LSSLTL).

This sequence belongs to the RNA methyltransferase RlmH family. Homodimer.

It localises to the cytoplasm. It carries out the reaction pseudouridine(1915) in 23S rRNA + S-adenosyl-L-methionine = N(3)-methylpseudouridine(1915) in 23S rRNA + S-adenosyl-L-homocysteine + H(+). In terms of biological role, specifically methylates the pseudouridine at position 1915 (m3Psi1915) in 23S rRNA. This Cupriavidus necator (strain ATCC 17699 / DSM 428 / KCTC 22496 / NCIMB 10442 / H16 / Stanier 337) (Ralstonia eutropha) protein is Ribosomal RNA large subunit methyltransferase H.